Consider the following 525-residue polypeptide: GMP synthase [glutamine-hydrolyzing] (525 aa).

A Glutamine amidotransferase type-1 domain is found at 9 to 207 (RILILDFGSQ…VQDICGCEAL (199 aa)). C86 (nucleophile) is an active-site residue. Residues H181 and E183 contribute to the active site. The GMPS ATP-PPase domain occupies 208–400 (WTASNIVEDA…LGLPYDMVYR (193 aa)). 235 to 241 (SGGVDSS) is a binding site for ATP.

In terms of assembly, homodimer.

The catalysed reaction is XMP + L-glutamine + ATP + H2O = GMP + L-glutamate + AMP + diphosphate + 2 H(+). Its pathway is purine metabolism; GMP biosynthesis; GMP from XMP (L-Gln route): step 1/1. In terms of biological role, catalyzes the synthesis of GMP from XMP. This is GMP synthase [glutamine-hydrolyzing] from Pseudomonas entomophila (strain L48).